The sequence spans 263 residues: MADWLIGIIMGAVEGLTEFLPVSSTGHMILTGHLIGFDDDRAKVFEVVIQLGSILAVVVIFWKRLWSLVGIGKVTDGPSLNLLHIIIGMIPAGVLGVLFHSAIKEVLFGPGPVVISLVAGGILMIVAEKFSKPSTARTLDEITYKQAFTIGMFQCLALWPGFSRSGSTISGGLLARVSHTAAAEYTFILAVPMMVAASGLDLIKSWDILSTADIQLFATGFITAFVVAMLAIVSFLKLLSRVKLTPFAYYRFILAAVFYFFIM.

8 consecutive transmembrane segments (helical) span residues 15–37 (GLTE…LIGF), 42–62 (AKVF…VIFW), 83–103 (LHII…HSAI), 106–126 (VLFG…LMIV), 142–162 (ITYK…WPGF), 183–203 (AEYT…LDLI), 216–236 (LFAT…VSFL), and 242–262 (VKLT…YFFI).

This sequence belongs to the UppP family.

It localises to the cell membrane. It carries out the reaction di-trans,octa-cis-undecaprenyl diphosphate + H2O = di-trans,octa-cis-undecaprenyl phosphate + phosphate + H(+). Its function is as follows. Catalyzes the dephosphorylation of undecaprenyl diphosphate (UPP). Confers resistance to bacitracin. This Bacillus thuringiensis subsp. konkukian (strain 97-27) protein is Undecaprenyl-diphosphatase 3.